The chain runs to 1061 residues: Isoleucine--tRNA ligase (1061 aa).

A 'HIGH' region motif is present at residues 50–60 (PYTSGSAHMGT). The 'KMSKS' region motif lies at 604–608 (KMSKS). An ATP-binding site is contributed by Lys-607.

It belongs to the class-I aminoacyl-tRNA synthetase family. IleS type 2 subfamily. As to quaternary structure, monomer. Requires Zn(2+) as cofactor.

The protein localises to the cytoplasm. It carries out the reaction tRNA(Ile) + L-isoleucine + ATP = L-isoleucyl-tRNA(Ile) + AMP + diphosphate. Catalyzes the attachment of isoleucine to tRNA(Ile). As IleRS can inadvertently accommodate and process structurally similar amino acids such as valine, to avoid such errors it has two additional distinct tRNA(Ile)-dependent editing activities. One activity is designated as 'pretransfer' editing and involves the hydrolysis of activated Val-AMP. The other activity is designated 'posttransfer' editing and involves deacylation of mischarged Val-tRNA(Ile). This Natronomonas pharaonis (strain ATCC 35678 / DSM 2160 / CIP 103997 / JCM 8858 / NBRC 14720 / NCIMB 2260 / Gabara) (Halobacterium pharaonis) protein is Isoleucine--tRNA ligase.